A 198-amino-acid chain; its full sequence is MAIKPTKSFQNCLEAEVPGYNDCPTVLFSIDPNSGPRSKSKQRTKSKRCVSGRLATEVLDLYGNTKTATTPPPVLRRPSVTAAQQESACEGVLVKDQGDRQLQPILCSKEELVAKINDLCVCGSKLSSKELEFYKKKLDSNITKILQNEHTKTVLSQIFNEKDKNMAVKTIKHWMVTDTTISNWCPAFLKIFENAMPN.

At S79 the chain carries Phosphoserine.

Its subcellular location is the cytoplasm. Functionally, involved in ER-associated protein degradation (ERAD). This is Alpha1-proteinase inhibitor-degradation deficient protein 37 (ADD37) from Saccharomyces cerevisiae (strain ATCC 204508 / S288c) (Baker's yeast).